Reading from the N-terminus, the 557-residue chain is MSNPRHNEREVRSPRGDELNAKSWLTEAPLRMLMNNLDPDVAERPHELVVYGGIGRAARTWDDFDRIVATLKTLNDDETLLVQSGKPVGVFRTHKDAPRVLIANSNLVPHWANWDHFNELDKKDLAMYGQMTAGSWIYIGAQGIVQGTYETFVEAGRQHYGGNLKGRWILTGGLGGMGGAQPLAAVMAGACCLAVECDETRADFRLRTRYVDEKTHSLDEALAKIDAWTKAGEAKSIALIGNAAEIFPELVKRGVKPDIVTDQTSAHDPVHGYLPLGWTVAEWRAKQENDPKAVEKVARASMKVQVQAMLDFWNAGIPTVDYGNNIRQMALEEGLENAFAFPGFVPAYIRPLFCRGIGPFRWAALSGDPEDIAKTDAKVKELLPDNKHLHNWLDMAKERIAFQGLPARICWVGLGDRHRLGLAFNEMVRNGELKAPIVIGRDHLDSGSVASPNRETEAMKDGSDAVSDWPLLNALLNTASGATWVSLHHGGGVGMGFSQHAGMVICCDGTEDADRRLERVLWNDPATGVMRHADAGYDIALDWARKQGLRLPAILGN.

Residues 1-20 (MSNPRHNEREVRSPRGDELN) are disordered. NAD(+) contacts are provided by residues 52–53 (GG), Q130, 176–178 (GMG), E196, R201, 242–243 (NA), 263–267 (QTSAH), 273–274 (YL), and Y322. The active site involves C410. Position 492 (G492) interacts with NAD(+).

The protein belongs to the urocanase family. NAD(+) serves as cofactor.

Its subcellular location is the cytoplasm. The catalysed reaction is 4-imidazolone-5-propanoate = trans-urocanate + H2O. The protein operates within amino-acid degradation; L-histidine degradation into L-glutamate; N-formimidoyl-L-glutamate from L-histidine: step 2/3. Functionally, catalyzes the conversion of urocanate to 4-imidazolone-5-propionate. The chain is Urocanate hydratase from Brucella canis (strain ATCC 23365 / NCTC 10854 / RM-666).